The sequence spans 151 residues: UPF0756 membrane protein Hore_21770 (151 aa).

5 helical membrane passes run 7–29 (LLII…GLLL), 49–69 (IEIG…LSPV), 84–104 (TVAI…LDLL), 110–130 (FILG…GIPV), and 131–151 (GPLM…IIKG).

This sequence belongs to the UPF0756 family.

The protein resides in the cell membrane. The sequence is that of UPF0756 membrane protein Hore_21770 from Halothermothrix orenii (strain H 168 / OCM 544 / DSM 9562).